Reading from the N-terminus, the 433-residue chain is Oxidoreductase acuF (433 aa).

The protein operates within secondary metabolite biosynthesis. Its function is as follows. Oxidoreductase; part of the gene cluster that mediates the biosynthesis of aculins. The pathway begins with the synthesis of 6-methylsalicylic acid by the polyketide synthase (PKS) acuA via condensation of acetate and malonate units. The 6-methylsalicylic acid decarboxylase acuB then catalyzes the decarboxylation of 6-methylsalicylic acid to yield m-cresol (also known as 3-methylphenol). These first reactions occur in the cytosol. The intermediate m-cresol is then transported into the endoplasmic reticulum where the cytochrome P450 monooxygenase acuC converts it to m-hydroxybenzyl alcohol, which is further converted to gentisyl alcohol by the cytochrome P450 monooxygenase acuD. Gentisyl alcohol is further oxidized by the oxidoreductase acuE that probably catalyzes hydroxylation of the aromatic ring. The aromatic system might then be opened by oxidation through a Baeyer-Villiger type of oxidation, which could be catalyzed by acuF, with the carboxylic acid at C-1 subsequently reduced to an aldehyde by acuG. Subsequently, a hemiacetal is formed, before the dehydrogenase acuH would reduce the double bond between C-4 and C-6. Finally, keto-enol tautomerism results in formation of aculinic acid, which exists as two diastereomers (both R/S configurations at C-1) by non-enzymatic hemiacetal formation. The carboxypeptidase acuI could be involved in the linking of aculinic acid to an aculene A moiety produced by the aculene biosynthesis cluster and which leads to the production of aculin A. AcuI may also be involved in the attachment of proline to aculinic acid to form epi-aculins A and B. This is Oxidoreductase acuF from Aspergillus aculeatus (strain ATCC 16872 / CBS 172.66 / WB 5094).